Here is a 557-residue protein sequence, read N- to C-terminus: 2-succinyl-5-enolpyruvyl-6-hydroxy-3-cyclohexene-1-carboxylate synthase (557 aa).

This sequence belongs to the TPP enzyme family. MenD subfamily. In terms of assembly, homodimer. Mg(2+) serves as cofactor. Requires Mn(2+) as cofactor. Thiamine diphosphate is required as a cofactor.

It catalyses the reaction isochorismate + 2-oxoglutarate + H(+) = 5-enolpyruvoyl-6-hydroxy-2-succinyl-cyclohex-3-ene-1-carboxylate + CO2. It participates in quinol/quinone metabolism; 1,4-dihydroxy-2-naphthoate biosynthesis; 1,4-dihydroxy-2-naphthoate from chorismate: step 2/7. The protein operates within quinol/quinone metabolism; menaquinone biosynthesis. Functionally, catalyzes the thiamine diphosphate-dependent decarboxylation of 2-oxoglutarate and the subsequent addition of the resulting succinic semialdehyde-thiamine pyrophosphate anion to isochorismate to yield 2-succinyl-5-enolpyruvyl-6-hydroxy-3-cyclohexene-1-carboxylate (SEPHCHC). The chain is 2-succinyl-5-enolpyruvyl-6-hydroxy-3-cyclohexene-1-carboxylate synthase from Yersinia enterocolitica serotype O:8 / biotype 1B (strain NCTC 13174 / 8081).